The primary structure comprises 432 residues: Alpha-galactosidase (432 aa).

NAD(+) is bound at residue 2-68 (KKITFIGAGS…PSVAINSYDD (67 aa)). Substrate is bound at residue Asn-148. Cys-169 is a binding site for Mn(2+). The Proton donor role is filled by His-170. His-199 is a Mn(2+) binding site.

It belongs to the glycosyl hydrolase 4 family. Homodimer. Requires Mn(2+) as cofactor. The cofactor is NAD(+).

It localises to the cytoplasm. It carries out the reaction Hydrolysis of terminal, non-reducing alpha-D-galactose residues in alpha-D-galactosides, including galactose oligosaccharides, galactomannans and galactolipids.. Its function is as follows. Catalyzes the hydrolysis of melibiose and alpha-galactosides of the raffinose family of oligosaccharides (RFOs) such as raffinose and stachyose. Cannot act on polymeric substrates such as locust bean gum. This is Alpha-galactosidase from Bacillus subtilis (strain 168).